The chain runs to 489 residues: Lysine--tRNA ligase (489 aa).

Residues glutamate 399 and glutamate 406 each coordinate Mg(2+).

It belongs to the class-II aminoacyl-tRNA synthetase family. Homodimer. It depends on Mg(2+) as a cofactor.

The protein resides in the cytoplasm. The catalysed reaction is tRNA(Lys) + L-lysine + ATP = L-lysyl-tRNA(Lys) + AMP + diphosphate. The polypeptide is Lysine--tRNA ligase (Synechococcus sp. (strain CC9311)).